Reading from the N-terminus, the 93-residue chain is Phosphoribosyl-ATP pyrophosphatase (93 aa).

The protein belongs to the PRA-PH family.

Its subcellular location is the cytoplasm. It carries out the reaction 1-(5-phospho-beta-D-ribosyl)-ATP + H2O = 1-(5-phospho-beta-D-ribosyl)-5'-AMP + diphosphate + H(+). It participates in amino-acid biosynthesis; L-histidine biosynthesis; L-histidine from 5-phospho-alpha-D-ribose 1-diphosphate: step 2/9. The protein is Phosphoribosyl-ATP pyrophosphatase of Rhodococcus erythropolis (strain PR4 / NBRC 100887).